The chain runs to 671 residues: UvrABC system protein B (671 aa).

The Helicase ATP-binding domain occupies 26-183; the sequence is EGLENGLAHQ…RRLSELQYSR (158 aa). Residue 39–46 coordinates ATP; sequence GVTGSGKT. The short motif at 92–115 is the Beta-hairpin element; the sequence is YYDYYQPEAYVPSSDTFIEKDASV. In terms of domain architecture, Helicase C-terminal spans 431–597; sequence QVDDLLSEIR…GLNKKIGDIL (167 aa). Positions 631-666 constitute a UVR domain; it reads DQKIRELEAKMYTYAQNLEFEQAAELRDQVHQLRQQ.

This sequence belongs to the UvrB family. In terms of assembly, forms a heterotetramer with UvrA during the search for lesions. Interacts with UvrC in an incision complex.

It is found in the cytoplasm. Its function is as follows. The UvrABC repair system catalyzes the recognition and processing of DNA lesions. A damage recognition complex composed of 2 UvrA and 2 UvrB subunits scans DNA for abnormalities. Upon binding of the UvrA(2)B(2) complex to a putative damaged site, the DNA wraps around one UvrB monomer. DNA wrap is dependent on ATP binding by UvrB and probably causes local melting of the DNA helix, facilitating insertion of UvrB beta-hairpin between the DNA strands. Then UvrB probes one DNA strand for the presence of a lesion. If a lesion is found the UvrA subunits dissociate and the UvrB-DNA preincision complex is formed. This complex is subsequently bound by UvrC and the second UvrB is released. If no lesion is found, the DNA wraps around the other UvrB subunit that will check the other stand for damage. The chain is UvrABC system protein B from Yersinia pseudotuberculosis serotype IB (strain PB1/+).